The chain runs to 94 residues: Acylphosphatase (94 aa).

The region spanning R8 to K94 is the Acylphosphatase-like domain. Residues R23 and N41 contribute to the active site.

It belongs to the acylphosphatase family.

It catalyses the reaction an acyl phosphate + H2O = a carboxylate + phosphate + H(+). The polypeptide is Acylphosphatase (acyP) (Frankia alni (strain DSM 45986 / CECT 9034 / ACN14a)).